A 225-amino-acid chain; its full sequence is Glycerol-3-phosphate acyltransferase (225 aa).

The next 6 helical transmembrane spans lie at 6 to 26 (FFFF…LIIG), 55 to 75 (WGIV…IICL), 95 to 115 (DIAI…SIFN), 135 to 155 (PFIG…VGYA), 160 to 180 (IMAT…PGIT), and 187 to 207 (ILYF…HSNI).

The protein belongs to the PlsY family. Probably interacts with PlsX.

It localises to the cell membrane. It carries out the reaction an acyl phosphate + sn-glycerol 3-phosphate = a 1-acyl-sn-glycero-3-phosphate + phosphate. It functions in the pathway lipid metabolism; phospholipid metabolism. Catalyzes the transfer of an acyl group from acyl-phosphate (acyl-PO(4)) to glycerol-3-phosphate (G3P) to form lysophosphatidic acid (LPA). This enzyme utilizes acyl-phosphate as fatty acyl donor, but not acyl-CoA or acyl-ACP. This chain is Glycerol-3-phosphate acyltransferase, found in Phytoplasma australiense.